Reading from the N-terminus, the 495-residue chain is Meiosis-specific nuclear structural protein 1 (495 aa).

Positions 1-315 (MASIRRTLSF…RLEEMLRQRE (315 aa)) are interaction with BBOF1. Coiled coils occupy residues 61–215 (QDEQ…EKLM) and 245–361 (IEEF…QMAL). The tract at residues 172-199 (EESAAEDKRNQAKAQYSHDLEKQLEEQG) is disordered.

This sequence belongs to the MNS1 family. In terms of assembly, able to form oligomers. Microtubule inner protein component of sperm flagellar doublet microtubules. Interacts with ODAD1. Interacts with BBOF1. As to expression, expressed in trachea multiciliated cells.

Its subcellular location is the nucleus. It localises to the cytoplasm. It is found in the cytoskeleton. The protein localises to the cilium axoneme. The protein resides in the flagellum axoneme. In terms of biological role, microtubule inner protein (MIP) part of the dynein-decorated doublet microtubules (DMTs) in cilia axoneme, which is required for motile cilia beating. May play a role in the control of meiotic division and germ cell differentiation through regulation of pairing and recombination during meiosis. Required for sperm flagella assembly. May play a role in the assembly and function of the outer dynein arm-docking complex (ODA-DC). ODA-DC mediates outer dynein arms (ODA) binding onto the axonemal doublet microtubules. The polypeptide is Meiosis-specific nuclear structural protein 1 (MNS1) (Bos taurus (Bovine)).